Here is a 64-residue protein sequence, read N- to C-terminus: Alpha-conotoxin-like Lt1.3 (64 aa).

The first 21 residues, 1 to 21, serve as a signal peptide directing secretion; the sequence is MGMRMMFTMFLLVVLTTTVVS. Residues 22–45 constitute a propeptide that is removed on maturation; it reads FNLDRESNHENRRTSNQITRGMWD. Intrachain disulfides connect Cys47–Cys53 and Cys48–Cys61. The tract at residues 49–51 is lacks the Ser-Xaa-Pro motif that is crucial for potent interaction with nAChR; it reads DDP.

It belongs to the conotoxin A superfamily. As to expression, expressed by the venom duct.

The protein resides in the secreted. Functionally, alpha-conotoxins act on postsynaptic membranes, they bind to the nicotinic acetylcholine receptors (nAChR) and thus inhibit them. Has possibly a distinct nAChR binding mode from other alpha-conotoxins, due to a different three residue motif (lacks the Ser-Xaa-Pro motif). The sequence is that of Alpha-conotoxin-like Lt1.3 from Conus litteratus (Lettered cone).